Reading from the N-terminus, the 449-residue chain is Naphthalene 1,2-dioxygenase system, large oxygenase component (449 aa).

Residues 39–137 form the Rieske domain; it reads WLFLTHDSLI…LNKKCLGLKE (99 aa). 4 residues coordinate [2Fe-2S] cluster: Cys-81, His-83, Cys-101, and His-104. The Fe cation site is built by His-208, His-213, and Asp-362.

Belongs to the bacterial ring-hydroxylating dioxygenase alpha subunit family. The naphthalene dioxygenase (NDO) multicomponent enzyme system is composed of an electron transfer component and a dioxygenase component (iron sulfur protein (ISP)). The electron transfer component is composed of a ferredoxin reductase (NdoR) and a ferredoxin (NdoA), and the dioxygenase component is formed of a heterohexamer (trimer of heterodimers) of three large alpha subunits (NdoB) and three small beta subunits (NdoC). [2Fe-2S] cluster serves as cofactor. It depends on Fe(2+) as a cofactor.

The catalysed reaction is naphthalene + NADH + O2 + H(+) = (1R,2S)-1,2-dihydronaphthalene-1,2-diol + NAD(+). Its pathway is aromatic compound metabolism; naphthalene degradation. In terms of biological role, component of the naphthalene dioxygenase (NDO) multicomponent enzyme system which catalyzes the incorporation of both atoms of molecular oxygen into naphthalene to form cis-(1R,2S)-dihydroxy-1,2-dihydronaphthalene. The alpha subunit has a catalytic role in the holoenzyme. This Pseudomonas fluorescens protein is Naphthalene 1,2-dioxygenase system, large oxygenase component.